An 881-amino-acid chain; its full sequence is Glutamate--tRNA ligase (881 aa).

Residues 1-480 (MSVRVRLAPS…ILRFKKSIGQ (480 aa)) are glutamyl-tRNA synthetase. Positions 9–19 (PSPTGNLHIGT) match the 'HIGH' region motif. The 'KMSKS' region signature appears at 248 to 252 (KLSKR). K251 contacts ATP. Residues 481–881 (EIEDTKIEDT…IKREIFGKPS (401 aa)) form a unknown region. Over residues 488-502 (EDTKKAETTPHKSKG) the composition is skewed to basic and acidic residues. Positions 488 to 747 (EDTKKAETTP…PTATDAETRE (260 aa)) are disordered. Residues 522 to 548 (QTQTTKPPKKGQTATPVATTPTATDVT) are compositionally biased toward low complexity. Polar residues predominate over residues 549–562 (ENTSVGTQETQSQI). Positions 563–576 (TTPVATTPTATDVT) are enriched in low complexity. The segment covering 577-590 (ENTSVGTQETQSQI) has biased composition (polar residues). A compositionally biased stretch (low complexity) spans 591–604 (TTPVATTPTATDVT). The span at 605 to 618 (ENTSVETQETQSQI) shows a compositional bias: polar residues. The span at 619–632 (TTPVATTPTATDVT) shows a compositional bias: low complexity. Positions 633–646 (ENTSVETQETQSQI) are enriched in polar residues. The span at 647 to 660 (TTPVATTPTATDVT) shows a compositional bias: low complexity. A compositionally biased stretch (polar residues) spans 661 to 674 (ENTSVGTQETQSQI). A compositionally biased stretch (low complexity) spans 675-688 (TTPVATTPTATDVT). The segment covering 689 to 702 (ENTSVETQETQSQI) has biased composition (polar residues). Residues 703 to 720 (TTPVATTSTATDVTENTS) show a composition bias toward low complexity. Residues 721 to 730 (VETQETQSQI) show a composition bias toward polar residues. Residues 731-742 (TTPVATTPTATD) show a composition bias toward low complexity. 2 helical membrane-spanning segments follow: residues 809 to 829 (LFGW…VIEA) and 832 to 852 (GIPI…VWFV).

It belongs to the class-I aminoacyl-tRNA synthetase family. Glutamate--tRNA ligase type 1 subfamily. As to quaternary structure, monomer.

The protein resides in the cytoplasm. It localises to the cell membrane. The catalysed reaction is tRNA(Glu) + L-glutamate + ATP = L-glutamyl-tRNA(Glu) + AMP + diphosphate. In terms of biological role, catalyzes the attachment of glutamate to tRNA(Glu) in a two-step reaction: glutamate is first activated by ATP to form Glu-AMP and then transferred to the acceptor end of tRNA(Glu). This chain is Glutamate--tRNA ligase (gltX), found in Trichodesmium erythraeum (strain IMS101).